Consider the following 611-residue polypeptide: MSRRTISKTMEHPSKTSIIKAAGLVFGDIGTSPIYTLAVLFLFLPPTPENIMGAVSLIFWTLLIMVTVQYTFLAMRLSETGEGGTLVLKGILIPLLKKPKGVAVFTLLATLGISLMIGECVITPAISILSAVEGVRQIPGFELIAQDWLIFLAILIALGLFLFQKRGTEGVSRTFGPVMVIWFLTLFISGAISVAFSPEILLAINPIYAVEFFIHNGLLGFFSLSMIVLCATGAEALFADMGHLGREPIQYAWGFVFIAVFFSYLGQAAYLLRNTDVINPLFEMIFSLSQILYIPFLLLMIIATIIASQAVISGIFSIIYQAITTHLLPMLPVDYTSDELRTQIYINTVNWLLCIAVICVLLIFQYSERLASAYGLAVTGTMSITGSFMIAIFLQRRKYLYMGIALIVTLVDITYFLSTVSKITHGGYLSLVIAAIPFTIVIIYTSGQRALYRSMKPMGHDQFIKKYTRAYKTARHLRGTALFFARSLDQVPAYISRTMFNNEIIYEENVIISLDIKDEPYGFSWHFDKSIEPGLSHLSISYGYMQIIDLMRIIRDAGIEEKTIFYGMEEIVTRNIIWKIFSAIKRLCPSFVQYYRLPSHKVHGVITRVEL.

A run of 13 helical transmembrane segments spans residues 24-44 (LVFG…FLFL), 55-75 (VSLI…FLAM), 102-122 (VAVF…ECVI), 143-163 (LIAQ…LFLF), 175-195 (FGPV…ISVA), 218-238 (LLGF…EALF), 252-272 (AWGF…AYLL), 275-295 (TDVI…LYIP), 296-316 (FLLL…SGIF), 344-364 (IYIN…LLIF), 374-394 (YGLA…AIFL), 400-420 (LYMG…LSTV), and 423-443 (ITHG…IVII).

It belongs to the HAK/KUP transporter (TC 2.A.72) family.

It localises to the cell membrane. It carries out the reaction K(+)(in) + H(+)(in) = K(+)(out) + H(+)(out). Transport of potassium into the cell. Likely operates as a K(+):H(+) symporter. In Methanospirillum hungatei JF-1 (strain ATCC 27890 / DSM 864 / NBRC 100397 / JF-1), this protein is Probable potassium transport system protein Kup.